The primary structure comprises 315 residues: Ribose-phosphate pyrophosphokinase (315 aa).

ATP-binding positions include 37 to 39 (DGE) and 96 to 97 (RQ). Mg(2+) is bound by residues histidine 131 and aspartate 171. Residue lysine 195 is part of the active site. Residues arginine 197, aspartate 221, and 225–229 (DTGGT) each bind D-ribose 5-phosphate.

The protein belongs to the ribose-phosphate pyrophosphokinase family. Class I subfamily. Homohexamer. Requires Mg(2+) as cofactor.

Its subcellular location is the cytoplasm. The enzyme catalyses D-ribose 5-phosphate + ATP = 5-phospho-alpha-D-ribose 1-diphosphate + AMP + H(+). It functions in the pathway metabolic intermediate biosynthesis; 5-phospho-alpha-D-ribose 1-diphosphate biosynthesis; 5-phospho-alpha-D-ribose 1-diphosphate from D-ribose 5-phosphate (route I): step 1/1. Its function is as follows. Involved in the biosynthesis of the central metabolite phospho-alpha-D-ribosyl-1-pyrophosphate (PRPP) via the transfer of pyrophosphoryl group from ATP to 1-hydroxyl of ribose-5-phosphate (Rib-5-P). This Haemophilus influenzae (strain ATCC 51907 / DSM 11121 / KW20 / Rd) protein is Ribose-phosphate pyrophosphokinase.